The primary structure comprises 180 residues: Insulin-like growth factor 2 (180 aa).

An N-terminal signal peptide occupies residues 1-24; it reads MGIPVGKSMLVLLISLAFALCCIA. Residues 25-52 form a b region; sequence AYGPGETLCGGELVDTLQFVCSDRGFYF. 3 disulfide bridges follow: Cys-33-Cys-71, Cys-45-Cys-84, and Cys-70-Cys-75. A c region spans residues 53–64; it reads SRPSSRANRRSR. The a stretch occupies residues 65–85; that stretch reads GIVEECCFRSCDLALLETYCA. A d region spans residues 86-91; the sequence is TPAKSE. Residues 92–180 constitute a propeptide, e peptide; it reads RDVSTSQAVL…ASSEMSSNHQ (89 aa). The disordered stretch occupies residues 157 to 180; sequence PLIVLPPKDPAHGGASSEMSSNHQ.

The protein belongs to the insulin family. As to quaternary structure, interacts with MYORG; this interaction is required for IGF2 secretion. Interacts with integrins ITGAV:ITGB3 and ITGA6:ITGB4; integrin-binding is required for IGF2 signaling. Interacts with IGFBP2. In terms of processing, proteolytically processed by PCSK4, proIGF2 is cleaved at Arg-128 and Arg-92 to generate big-IGF2 and mature IGF2. In terms of tissue distribution, expressed in the heart, blood serum, kidney and skeletal muscle including the tibialis anterior muscle.

The protein resides in the secreted. Its function is as follows. The insulin-like growth factors possess growth-promoting activity. Major fetal growth hormone in mammals. Plays a key role in regulating fetoplacental development. IGF2 is influenced by placental lactogen. Also involved in tissue differentiation. In adults, involved in glucose metabolism in adipose tissue, skeletal muscle and liver. Acts as a ligand for integrin which is required for IGF2 signaling. Positively regulates myogenic transcription factor MYOD1 function by facilitating the recruitment of transcriptional coactivators, thereby controlling muscle terminal differentiation. Inhibits myoblast differentiation and modulates metabolism via increasing the mitochondrial respiration rate. In terms of biological role, preptin undergoes glucose-mediated co-secretion with insulin, and acts as a physiological amplifier of glucose-mediated insulin secretion. Exhibits osteogenic properties by increasing osteoblast mitogenic activity through phosphoactivation of MAPK1 and MAPK3. The protein is Insulin-like growth factor 2 of Mus musculus (Mouse).